The following is a 284-amino-acid chain: Probable ADP-ribose 1''-phosphate phosphatase YML087W (284 aa).

Positions 23, 55, 80, and 90 each coordinate substrate. The Macro domain maps to 34–230 (ESIPHAYIQN…HISKELKNVL (197 aa)). Residues Asn-80 and Asp-90 contribute to the active site. A disulfide bond links Cys-128 and Cys-136. Residue His-145 is part of the active site. Residues Thr-148 and Thr-195 each contribute to the substrate site.

Homodimer.

It carries out the reaction ADP-alpha-D-ribose 1''-phosphate + H2O = ADP-D-ribose + phosphate. Highly specific phosphatase involved in the metabolism of ADP-ribose 1''-phosphate (Appr1p) which is produced as a consequence of tRNA splicing. + phosphate. This Saccharomyces cerevisiae (strain ATCC 204508 / S288c) (Baker's yeast) protein is Probable ADP-ribose 1''-phosphate phosphatase YML087W.